The sequence spans 92 residues: UPF0223 protein SSA_0938 (92 aa).

Belongs to the UPF0223 family.

The protein is UPF0223 protein SSA_0938 of Streptococcus sanguinis (strain SK36).